A 152-amino-acid polypeptide reads, in one-letter code: NADH-quinone oxidoreductase subunit I 1 (152 aa).

4Fe-4S ferredoxin-type domains follow at residues 53–83 and 94–123; these read MKLGENGETLCIGCNLCALACPENLIAMKSD and VTYVYDVSRCMFCGLCEEACPTQSLKLGTG. [4Fe-4S] cluster-binding residues include cysteine 63, cysteine 66, cysteine 69, cysteine 73, cysteine 103, cysteine 106, cysteine 109, and cysteine 113.

It belongs to the complex I 23 kDa subunit family. As to quaternary structure, NDH-1 is composed of 14 different subunits. Subunits NuoA, H, J, K, L, M, N constitute the membrane sector of the complex. [4Fe-4S] cluster serves as cofactor.

It is found in the cell inner membrane. The enzyme catalyses a quinone + NADH + 5 H(+)(in) = a quinol + NAD(+) + 4 H(+)(out). Functionally, NDH-1 shuttles electrons from NADH, via FMN and iron-sulfur (Fe-S) centers, to quinones in the respiratory chain. The immediate electron acceptor for the enzyme in this species is believed to be ubiquinone. Couples the redox reaction to proton translocation (for every two electrons transferred, four hydrogen ions are translocated across the cytoplasmic membrane), and thus conserves the redox energy in a proton gradient. The polypeptide is NADH-quinone oxidoreductase subunit I 1 (Koribacter versatilis (strain Ellin345)).